The chain runs to 385 residues: uncharacterized protein (385 aa).

The next 9 membrane-spanning stretches (helical) occupy residues 12-32 (GVAI…PKAA), 50-70 (WAFL…LLFG), 90-110 (LLVL…ILLA), 132-152 (FNTG…LGLI), 195-215 (LALG…GAAL), 233-253 (TGFV…ALQW), 272-292 (LSAP…WPQL), 312-332 (YLLQ…FMHF), and 335-355 (LELL…SVIW).

The protein to B.subtilis YxaH and YrkO.

The protein localises to the cell membrane. Functionally, involved in transport. This is an uncharacterized protein from Escherichia coli (strain K12).